The sequence spans 447 residues: Trigger factor (447 aa).

A PPIase FKBP-type domain is found at 159–244 (GDMLLMQVES…VREIKEEKLP (86 aa)).

Belongs to the FKBP-type PPIase family. Tig subfamily.

The protein resides in the cytoplasm. The catalysed reaction is [protein]-peptidylproline (omega=180) = [protein]-peptidylproline (omega=0). Its function is as follows. Involved in protein export. Acts as a chaperone by maintaining the newly synthesized protein in an open conformation. Functions as a peptidyl-prolyl cis-trans isomerase. The protein is Trigger factor of Dehalococcoides mccartyi (strain ATCC BAA-2100 / JCM 16839 / KCTC 5957 / BAV1).